Reading from the N-terminus, the 243-residue chain is uncharacterized protein (243 aa).

Cysteine 120 and cysteine 157 together coordinate [4Fe-4S] cluster.

In terms of assembly, homodimer. The cofactor is [4Fe-4S] cluster.

This is an uncharacterized protein from Methanocaldococcus jannaschii (strain ATCC 43067 / DSM 2661 / JAL-1 / JCM 10045 / NBRC 100440) (Methanococcus jannaschii).